The sequence spans 505 residues: 2,3-bisphosphoglycerate-independent phosphoglycerate mutase (505 aa).

Mn(2+)-binding residues include Asp15 and Ser65. The active-site Phosphoserine intermediate is Ser65. Residues His126, 156–157 (RD), Arg187, Arg193, 260–263 (RPDR), and Lys333 each bind substrate. The Mn(2+) site is built by Asp398, His402, Asp439, His440, and His457.

Belongs to the BPG-independent phosphoglycerate mutase family. Monomer. Mn(2+) serves as cofactor.

It carries out the reaction (2R)-2-phosphoglycerate = (2R)-3-phosphoglycerate. It functions in the pathway carbohydrate degradation; glycolysis; pyruvate from D-glyceraldehyde 3-phosphate: step 3/5. Its function is as follows. Catalyzes the interconversion of 2-phosphoglycerate and 3-phosphoglycerate. This is 2,3-bisphosphoglycerate-independent phosphoglycerate mutase from Mycoplasmopsis pulmonis (strain UAB CTIP) (Mycoplasma pulmonis).